Reading from the N-terminus, the 348-residue chain is uncharacterized protein (348 aa).

This is an uncharacterized protein from Aquifex aeolicus (strain VF5).